We begin with the raw amino-acid sequence, 311 residues long: 4-diphosphocytidyl-2-C-methyl-D-erythritol kinase (311 aa).

Residue Lys-9 is part of the active site. An ATP-binding site is contributed by 95-105 (PLGAGLAGGST). The active site involves Asp-137.

Belongs to the GHMP kinase family. IspE subfamily.

It carries out the reaction 4-CDP-2-C-methyl-D-erythritol + ATP = 4-CDP-2-C-methyl-D-erythritol 2-phosphate + ADP + H(+). Its pathway is isoprenoid biosynthesis; isopentenyl diphosphate biosynthesis via DXP pathway; isopentenyl diphosphate from 1-deoxy-D-xylulose 5-phosphate: step 3/6. In terms of biological role, catalyzes the phosphorylation of the position 2 hydroxy group of 4-diphosphocytidyl-2C-methyl-D-erythritol. The chain is 4-diphosphocytidyl-2-C-methyl-D-erythritol kinase from Thermosynechococcus vestitus (strain NIES-2133 / IAM M-273 / BP-1).